Reading from the N-terminus, the 282-residue chain is Bifunctional protein FolD (282 aa).

NADP(+) contacts are provided by residues asparagine 165 to serine 167, serine 190, and isoleucine 231.

This sequence belongs to the tetrahydrofolate dehydrogenase/cyclohydrolase family. As to quaternary structure, homodimer.

The catalysed reaction is (6R)-5,10-methylene-5,6,7,8-tetrahydrofolate + NADP(+) = (6R)-5,10-methenyltetrahydrofolate + NADPH. It catalyses the reaction (6R)-5,10-methenyltetrahydrofolate + H2O = (6R)-10-formyltetrahydrofolate + H(+). It functions in the pathway one-carbon metabolism; tetrahydrofolate interconversion. Functionally, catalyzes the oxidation of 5,10-methylenetetrahydrofolate to 5,10-methenyltetrahydrofolate and then the hydrolysis of 5,10-methenyltetrahydrofolate to 10-formyltetrahydrofolate. This is Bifunctional protein FolD from Clostridium botulinum (strain Langeland / NCTC 10281 / Type F).